The chain runs to 246 residues: Pyridoxine 5'-phosphate synthase (246 aa).

N9 is a binding site for 3-amino-2-oxopropyl phosphate. Residue 11–12 participates in 1-deoxy-D-xylulose 5-phosphate binding; that stretch reads DH. R20 serves as a coordination point for 3-amino-2-oxopropyl phosphate. The Proton acceptor role is filled by H45. 1-deoxy-D-xylulose 5-phosphate-binding residues include R47 and H52. E72 (proton acceptor) is an active-site residue. Residue T102 participates in 1-deoxy-D-xylulose 5-phosphate binding. H193 acts as the Proton donor in catalysis. Residues G194 and 215–216 each bind 3-amino-2-oxopropyl phosphate; that span reads GH.

It belongs to the PNP synthase family. As to quaternary structure, homooctamer; tetramer of dimers.

The protein localises to the cytoplasm. The catalysed reaction is 3-amino-2-oxopropyl phosphate + 1-deoxy-D-xylulose 5-phosphate = pyridoxine 5'-phosphate + phosphate + 2 H2O + H(+). It participates in cofactor biosynthesis; pyridoxine 5'-phosphate biosynthesis; pyridoxine 5'-phosphate from D-erythrose 4-phosphate: step 5/5. Its function is as follows. Catalyzes the complicated ring closure reaction between the two acyclic compounds 1-deoxy-D-xylulose-5-phosphate (DXP) and 3-amino-2-oxopropyl phosphate (1-amino-acetone-3-phosphate or AAP) to form pyridoxine 5'-phosphate (PNP) and inorganic phosphate. This chain is Pyridoxine 5'-phosphate synthase, found in Colwellia psychrerythraea (strain 34H / ATCC BAA-681) (Vibrio psychroerythus).